A 171-amino-acid chain; its full sequence is Large ribosomal subunit protein bL9 (171 aa).

The protein belongs to the bacterial ribosomal protein bL9 family.

Binds to the 23S rRNA. The protein is Large ribosomal subunit protein bL9 of Orientia tsutsugamushi (strain Ikeda) (Rickettsia tsutsugamushi).